We begin with the raw amino-acid sequence, 421 residues long: Imidazolonepropionase (421 aa).

Fe(3+)-binding residues include H81 and H83. Zn(2+)-binding residues include H81 and H83. Positions 90, 153, and 186 each coordinate 4-imidazolone-5-propanoate. Y153 lines the N-formimidoyl-L-glutamate pocket. H251 is a binding site for Fe(3+). H251 lines the Zn(2+) pocket. 4-imidazolone-5-propanoate is bound at residue E254. D326 is a binding site for Fe(3+). D326 serves as a coordination point for Zn(2+). N328 and G330 together coordinate N-formimidoyl-L-glutamate. Residue S331 coordinates 4-imidazolone-5-propanoate.

This sequence belongs to the metallo-dependent hydrolases superfamily. HutI family. Requires Zn(2+) as cofactor. The cofactor is Fe(3+).

It localises to the cytoplasm. The enzyme catalyses 4-imidazolone-5-propanoate + H2O = N-formimidoyl-L-glutamate. Its pathway is amino-acid degradation; L-histidine degradation into L-glutamate; N-formimidoyl-L-glutamate from L-histidine: step 3/3. Catalyzes the hydrolytic cleavage of the carbon-nitrogen bond in imidazolone-5-propanoate to yield N-formimidoyl-L-glutamate. It is the third step in the universal histidine degradation pathway. The protein is Imidazolonepropionase of Streptococcus pyogenes serotype M12 (strain MGAS2096).